A 299-amino-acid polypeptide reads, in one-letter code: Delta-9 desaturase-like 1 protein (299 aa).

2 helical membrane-spanning segments follow: residues 31–51 (IDIARASAVGAVHLLCLLAPF) and 55–75 (WEALRFGVILAIVTSLSITFS). The short motif at 77 to 82 (HRNLTH) is the Histidine box-1 element. Residues 114 to 118 (HRFHH) carry the Histidine box-2 motif. Helical transmembrane passes span 174-194 (IGLHILTFWTLVYLWGGLPYL) and 198-218 (VGVGGTIGYNGTWLINSACHI). The Histidine box-3 motif lies at 246–250 (HNNHH). The chain crosses the membrane as a helical span at residues 262 to 282 (WYQVDLTWYLICFFQALGLAT).

Belongs to the fatty acid desaturase type 1 family. Fe cation is required as a cofactor.

The protein localises to the endoplasmic reticulum membrane. The protein operates within lipid metabolism; polyunsaturated fatty acid biosynthesis. This is Delta-9 desaturase-like 1 protein from Arabidopsis thaliana (Mouse-ear cress).